A 113-amino-acid polypeptide reads, in one-letter code: Large ribosomal subunit protein bL17 (113 aa).

It belongs to the bacterial ribosomal protein bL17 family. Part of the 50S ribosomal subunit. Contacts protein L32.

The chain is Large ribosomal subunit protein bL17 from Clostridium botulinum (strain Alaska E43 / Type E3).